Consider the following 887-residue polypeptide: Pyruvate dehydrogenase E1 component (887 aa).

Residues D231, N261, and Q263 each contribute to the Mg(2+) site. K716 carries the N6-acetyllysine modification.

In terms of assembly, homodimer. Part of the PDH complex, consisting of multiple copies of pyruvate dehydrogenase (E1), dihydrolipoamide acetyltransferase (E2) and lipoamide dehydrogenase (E3). The cofactor is Mg(2+). Thiamine diphosphate is required as a cofactor.

The enzyme catalyses N(6)-[(R)-lipoyl]-L-lysyl-[protein] + pyruvate + H(+) = N(6)-[(R)-S(8)-acetyldihydrolipoyl]-L-lysyl-[protein] + CO2. Functionally, component of the pyruvate dehydrogenase (PDH) complex, that catalyzes the overall conversion of pyruvate to acetyl-CoA and CO(2). This is Pyruvate dehydrogenase E1 component (aceE) from Escherichia coli O157:H7.